The following is a 496-amino-acid chain: MEDQKEALRKIITTLAVKNEEIQSFIYSLKQMLLNVEANSAKVQEDLEAEFQSLFSLLEELKEGMLMKIKQDRASRTYELQNQLAACTRALESSEELLETANQTLLATDSKDFPQAAKQIKDGVTMAPAFRLSLKAKVSDNMSHLMVDFAQERRMLQALTFLPVPSAPVIDLTESLVADNCVTLVWRMPDEDNKIDHFVLEYRRTNFEGPPRLKEDQPWMVIEGIRQTEYTLTGLKFDMKYMNFRVKACNKAVSGEFSEPVTLETPAFMFRLDASTSHQNLRVDDLSVEWDAMGGKVQDIKAREKDGKGRTASPVNSPARGTPSPKRMPSGRGGRDRFTAESYTVLGDTLIDGGEHYWEVRYEPDSKAFGVGVAYRSLGRFEQLGKTAASWCLHVNNWLQVSFTAKHANKAKMLDAPVPDCLGVHCDFHQGLLSFYNGRTKQLLHTFKAKFTQPLLPAFTVWCGSFHVTTGLQVPSSVRCLQKRGSATSSSNTSLT.

Residues 4-99 (QKEALRKIIT…ALESSEELLE (96 aa)) are a coiled coil. The COS domain maps to 105 to 162 (LLATDSKDFPQAAKQIKDGVTMAPAFRLSLKAKVSDNMSHLMVDFAQERRMLQALTFL). Residues 164 to 268 (VPSAPVIDLT…EPVTLETPAF (105 aa)) enclose the Fibronectin type-III domain. Residues 268 to 477 (FMFRLDASTS…VTTGLQVPSS (210 aa)) enclose the B30.2/SPRY domain. Residues 301–336 (KAREKDGKGRTASPVNSPARGTPSPKRMPSGRGGRD) are disordered. Omega-N-methylarginine is present on residues arginine 310 and arginine 320.

In terms of assembly, oligomerization is required for binding to microtubules.

Its subcellular location is the cytoplasm. The protein localises to the cytoskeleton. It is found in the microtubule organizing center. It localises to the centrosome. The protein resides in the nucleus. Its subcellular location is the cleavage furrow. In terms of biological role, may be involved in microtubule organization and stabilization. In Bos taurus (Bovine), this protein is Fibronectin type III and SPRY domain-containing protein 1 (FSD1).